The chain runs to 94 residues: Translation initiation factor 1A 2 (94 aa).

An S1-like domain is found at 6–80 (GRRNLRMPND…EKANVEWRYS (75 aa)).

It belongs to the eIF-1A family.

In terms of biological role, seems to be required for maximal rate of protein biosynthesis. Enhances ribosome dissociation into subunits and stabilizes the binding of the initiator Met-tRNA(I) to 40 S ribosomal subunits. This chain is Translation initiation factor 1A 2 (eIF1A2), found in Halobacterium salinarum (strain ATCC 700922 / JCM 11081 / NRC-1) (Halobacterium halobium).